The sequence spans 361 residues: tRNA-specific 2-thiouridylase MnmA (361 aa).

ATP is bound by residues 11–18 (GMSGGVDS) and Met-37. Positions 97–99 (NPD) are interaction with target base in tRNA. Cys-102 serves as the catalytic Nucleophile. Cys-102 and Cys-199 are disulfide-bonded. Residue Gly-126 coordinates ATP. Positions 149-151 (KDQ) are interaction with tRNA. Cys-199 acts as the Cysteine persulfide intermediate in catalysis. Positions 311–312 (RY) are interaction with tRNA.

It belongs to the MnmA/TRMU family.

It localises to the cytoplasm. It catalyses the reaction S-sulfanyl-L-cysteinyl-[protein] + uridine(34) in tRNA + AH2 + ATP = 2-thiouridine(34) in tRNA + L-cysteinyl-[protein] + A + AMP + diphosphate + H(+). Its function is as follows. Catalyzes the 2-thiolation of uridine at the wobble position (U34) of tRNA, leading to the formation of s(2)U34. This Cupriavidus necator (strain ATCC 17699 / DSM 428 / KCTC 22496 / NCIMB 10442 / H16 / Stanier 337) (Ralstonia eutropha) protein is tRNA-specific 2-thiouridylase MnmA.